The primary structure comprises 112 residues: Protein F-112 (112 aa).

Its function is as follows. Essential for virus function. This chain is Protein F-112, found in Saccharolobus solfataricus (Sulfolobus solfataricus).